Here is a 455-residue protein sequence, read N- to C-terminus: Exodeoxyribonuclease 7 large subunit (455 aa).

This sequence belongs to the XseA family. In terms of assembly, heterooligomer composed of large and small subunits.

The protein resides in the cytoplasm. The enzyme catalyses Exonucleolytic cleavage in either 5'- to 3'- or 3'- to 5'-direction to yield nucleoside 5'-phosphates.. In terms of biological role, bidirectionally degrades single-stranded DNA into large acid-insoluble oligonucleotides, which are then degraded further into small acid-soluble oligonucleotides. The chain is Exodeoxyribonuclease 7 large subunit from Escherichia coli (strain SMS-3-5 / SECEC).